The chain runs to 235 residues: Proteasome subunit beta type-1 (235 aa).

Residues 1-20 constitute a propeptide that is removed on maturation; sequence MSRLGFEQFPDYQVPGMKHP.

It belongs to the peptidase T1B family. As to quaternary structure, the 26S proteasome consists of a 20S proteasome core and two 19S regulatory subunits. The 20S proteasome core is composed of 28 subunits that are arranged in four stacked rings, resulting in a barrel-shaped structure. The two end rings are each formed by seven alpha subunits, and the two central rings are each formed by seven beta subunits. The catalytic chamber with the active sites is on the inside of the barrel.

Its subcellular location is the cytoplasm. The protein localises to the nucleus. In terms of biological role, non-catalytic component of the proteasome, a multicatalytic proteinase complex which is characterized by its ability to cleave peptides with Arg, Phe, Tyr, Leu, and Glu adjacent to the leaving group at neutral or slightly basic pH. The proteasome has an ATP-dependent proteolytic activity. In Drosophila melanogaster (Fruit fly), this protein is Proteasome subunit beta type-1 (Prosbeta6).